The following is a 228-amino-acid chain: Urease accessory protein UreF (228 aa).

This sequence belongs to the UreF family. In terms of assembly, ureD, UreF and UreG form a complex that acts as a GTP-hydrolysis-dependent molecular chaperone, activating the urease apoprotein by helping to assemble the nickel containing metallocenter of UreC. The UreE protein probably delivers the nickel.

It localises to the cytoplasm. Required for maturation of urease via the functional incorporation of the urease nickel metallocenter. The sequence is that of Urease accessory protein UreF from Prochlorococcus marinus (strain MIT 9215).